Consider the following 230-residue polypeptide: 3,4-dihydroxy-2-butanone 4-phosphate synthase (230 aa).

Residues 42–43 (RE), Asp-47, 155–159 (RRGHT), and Glu-179 each bind D-ribulose 5-phosphate. Residue Glu-43 participates in Mg(2+) binding. His-158 lines the Mg(2+) pocket.

This sequence belongs to the DHBP synthase family. As to quaternary structure, homodimer. It depends on Mg(2+) as a cofactor. The cofactor is Mn(2+).

The enzyme catalyses D-ribulose 5-phosphate = (2S)-2-hydroxy-3-oxobutyl phosphate + formate + H(+). Its pathway is cofactor biosynthesis; riboflavin biosynthesis; 2-hydroxy-3-oxobutyl phosphate from D-ribulose 5-phosphate: step 1/1. Catalyzes the conversion of D-ribulose 5-phosphate to formate and 3,4-dihydroxy-2-butanone 4-phosphate. This is 3,4-dihydroxy-2-butanone 4-phosphate synthase from Bordetella bronchiseptica (strain ATCC BAA-588 / NCTC 13252 / RB50) (Alcaligenes bronchisepticus).